A 277-amino-acid polypeptide reads, in one-letter code: Ribonuclease HII (277 aa).

Residues Met-1 to Ala-32 form a disordered region. Residues Lys-20–Ala-32 show a composition bias toward low complexity. Residues Trp-64–Pro-252 enclose the RNase H type-2 domain. Residues Asp-70, Glu-71, and Asp-161 each contribute to the a divalent metal cation site.

It belongs to the RNase HII family. The cofactor is Mn(2+). Mg(2+) serves as cofactor.

It is found in the cytoplasm. The enzyme catalyses Endonucleolytic cleavage to 5'-phosphomonoester.. Endonuclease that specifically degrades the RNA of RNA-DNA hybrids. In Bradyrhizobium sp. (strain ORS 278), this protein is Ribonuclease HII.